The following is a 108-amino-acid chain: ATP synthase peripheral stalk subunit F6, mitochondrial (108 aa).

The N-terminal 32 residues, 1 to 32 (MILQRLFRLSSAVQSAISVSWRRNIGITAVAF), are a transit peptide targeting the mitochondrion. Residues lysine 41, lysine 46, and lysine 79 each carry the N6-acetyllysine modification. Lysine 84 and lysine 99 each carry N6-acetyllysine; alternate. An N6-succinyllysine; alternate mark is found at lysine 84 and lysine 99. Lysine 105 is modified (N6-acetyllysine). Residue serine 108 is modified to Phosphoserine.

Belongs to the eukaryotic ATPase subunit F6 family. Component of the ATP synthase complex composed at least of ATP5F1A/subunit alpha, ATP5F1B/subunit beta, ATP5MC1/subunit c (homooctomer), MT-ATP6/subunit a, MT-ATP8/subunit 8, ATP5ME/subunit e, ATP5MF/subunit f, ATP5MG/subunit g, ATP5MK/subunit k, ATP5MJ/subunit j, ATP5F1C/subunit gamma, ATP5F1D/subunit delta, ATP5F1E/subunit epsilon, ATP5PF/subunit F6, ATP5PB/subunit b, ATP5PD/subunit d, ATP5PO/subunit OSCP. ATP synthase complex consists of a soluble F(1) head domain (subunits alpha(3) and beta(3)) - the catalytic core - and a membrane F(0) domain - the membrane proton channel (subunits c, a, 8, e, f, g, k and j). These two domains are linked by a central stalk (subunits gamma, delta, and epsilon) rotating inside the F1 region and a stationary peripheral stalk (subunits F6, b, d, and OSCP).

It localises to the mitochondrion. The protein resides in the mitochondrion inner membrane. Its function is as follows. Subunit F6, of the mitochondrial membrane ATP synthase complex (F(1)F(0) ATP synthase or Complex V) that produces ATP from ADP in the presence of a proton gradient across the membrane which is generated by electron transport complexes of the respiratory chain. ATP synthase complex consist of a soluble F(1) head domain - the catalytic core - and a membrane F(1) domain - the membrane proton channel. These two domains are linked by a central stalk rotating inside the F(1) region and a stationary peripheral stalk. During catalysis, ATP synthesis in the catalytic domain of F(1) is coupled via a rotary mechanism of the central stalk subunits to proton translocation. In vivo, can only synthesize ATP although its ATP hydrolase activity can be activated artificially in vitro. Part of the complex F(0) domain. Part of the complex F(0) domain and the peripheric stalk, which acts as a stator to hold the catalytic alpha(3)beta(3) subcomplex and subunit a/ATP6 static relative to the rotary elements. This is ATP synthase peripheral stalk subunit F6, mitochondrial from Bos taurus (Bovine).